The sequence spans 387 residues: F-box protein DOR (387 aa).

The F-box domain maps to 19–64 (DENFEPIPIDLVIEIFSRSPVKSIARCRCVSKLWASILRLPYFTEL).

In terms of assembly, part of a SCF (ASK-cullin-F-box) protein ligase complex. Interacts with ASK14 and CUL1. Strongly expressed in guard cells. Mostly represented in seedlings, leaves and flowers, and, to a lower extent, in roots and siliques.

It participates in protein modification; protein ubiquitination. Its function is as follows. Component of SCF(ASK-cullin-F-box) E3 ubiquitin ligase complexes, which may mediate the ubiquitination and subsequent proteasomal degradation of target proteins. Negative regulator of guard cell abscisic acid (ABA) signaling, especially during drought stress. This Arabidopsis thaliana (Mouse-ear cress) protein is F-box protein DOR (DOR).